Reading from the N-terminus, the 93-residue chain is Small ribosomal subunit protein uS19c (93 aa).

It belongs to the universal ribosomal protein uS19 family.

It is found in the plastid. It localises to the chloroplast. In terms of biological role, protein S19 forms a complex with S13 that binds strongly to the 16S ribosomal RNA. This Tetradesmus obliquus (Green alga) protein is Small ribosomal subunit protein uS19c.